Consider the following 280-residue polypeptide: Diaminopimelate epimerase (280 aa).

Residues Asn13 and Asn67 each coordinate substrate. Cys76 (proton donor) is an active-site residue. Residues 77–78, Asn191, and 208–209 each bind substrate; these read GN and ER. The active-site Proton acceptor is the Cys218. A substrate-binding site is contributed by 219-220; sequence GT.

It belongs to the diaminopimelate epimerase family. As to quaternary structure, homodimer.

The protein localises to the cytoplasm. The catalysed reaction is (2S,6S)-2,6-diaminopimelate = meso-2,6-diaminopimelate. The protein operates within amino-acid biosynthesis; L-lysine biosynthesis via DAP pathway; DL-2,6-diaminopimelate from LL-2,6-diaminopimelate: step 1/1. Its function is as follows. Catalyzes the stereoinversion of LL-2,6-diaminopimelate (L,L-DAP) to meso-diaminopimelate (meso-DAP), a precursor of L-lysine. The chain is Diaminopimelate epimerase from Archaeoglobus fulgidus (strain ATCC 49558 / DSM 4304 / JCM 9628 / NBRC 100126 / VC-16).